The following is a 117-amino-acid chain: CUE domain-containing protein CUE4 (117 aa).

Residues 27-74 form a disordered region; sequence QVPSRTVQDAKPAPSVATNDPSPEPVPSAPEERVARLNRHGSDRKRAV. Lys-37 participates in a covalent cross-link: Glycyl lysine isopeptide (Lys-Gly) (interchain with G-Cter in ubiquitin). The residue at position 48 (Ser-48) is a Phosphoserine. The span at 56 to 74 shows a compositional bias: basic and acidic residues; that stretch reads PEERVARLNRHGSDRKRAV. The 43-residue stretch at 74 to 116 folds into the CUE domain; the sequence is VNSDMVEIVMTMAPHVPQEKVVQDLRNTGSIEHTMENIFAGKL.

In terms of processing, ubiquitinated.

Its subcellular location is the cytoplasm. It is found in the endoplasmic reticulum. This is CUE domain-containing protein CUE4 (CUE4) from Saccharomyces cerevisiae (strain ATCC 204508 / S288c) (Baker's yeast).